We begin with the raw amino-acid sequence, 351 residues long: Phospho-N-acetylmuramoyl-pentapeptide-transferase (351 aa).

10 helical membrane-spanning segments follow: residues 17–37, 63–83, 85–105, 135–155, 158–178, 190–210, 230–250, 254–274, 279–299, and 328–348; these read TAYA…FIIL, IPTM…FFWI, LWNV…CLGF, ISVT…YFPF, SLKL…LISA, GLAI…AYLT, LVIF…FNAY, IMMG…TALI, ILFA…IIQV, and QVVI…LSTL.

This sequence belongs to the glycosyltransferase 4 family. MraY subfamily. Mg(2+) serves as cofactor.

It is found in the cell inner membrane. It catalyses the reaction UDP-N-acetyl-alpha-D-muramoyl-L-alanyl-gamma-D-glutamyl-meso-2,6-diaminopimeloyl-D-alanyl-D-alanine + di-trans,octa-cis-undecaprenyl phosphate = di-trans,octa-cis-undecaprenyl diphospho-N-acetyl-alpha-D-muramoyl-L-alanyl-D-glutamyl-meso-2,6-diaminopimeloyl-D-alanyl-D-alanine + UMP. It functions in the pathway cell wall biogenesis; peptidoglycan biosynthesis. Its function is as follows. Catalyzes the initial step of the lipid cycle reactions in the biosynthesis of the cell wall peptidoglycan: transfers peptidoglycan precursor phospho-MurNAc-pentapeptide from UDP-MurNAc-pentapeptide onto the lipid carrier undecaprenyl phosphate, yielding undecaprenyl-pyrophosphoryl-MurNAc-pentapeptide, known as lipid I. This chain is Phospho-N-acetylmuramoyl-pentapeptide-transferase, found in Borrelia hermsii (strain HS1 / DAH).